A 423-amino-acid polypeptide reads, in one-letter code: Tyrosine--tRNA ligase (423 aa).

Residue tyrosine 35 coordinates L-tyrosine. The short motif at 40–49 is the 'HIGH' region element; sequence PTAASLHVGH. L-tyrosine is bound by residues tyrosine 170 and glutamine 174. The 'KMSKS' region motif lies at 231–235; that stretch reads KFGKS. Lysine 234 is an ATP binding site. In terms of domain architecture, S4 RNA-binding spans 353-419; that stretch reads GPLVDLLVEV…GKKNLAAVEV (67 aa).

Belongs to the class-I aminoacyl-tRNA synthetase family. TyrS type 1 subfamily. As to quaternary structure, homodimer.

The protein resides in the cytoplasm. The catalysed reaction is tRNA(Tyr) + L-tyrosine + ATP = L-tyrosyl-tRNA(Tyr) + AMP + diphosphate + H(+). Catalyzes the attachment of tyrosine to tRNA(Tyr) in a two-step reaction: tyrosine is first activated by ATP to form Tyr-AMP and then transferred to the acceptor end of tRNA(Tyr). The chain is Tyrosine--tRNA ligase from Streptomyces griseus subsp. griseus (strain JCM 4626 / CBS 651.72 / NBRC 13350 / KCC S-0626 / ISP 5235).